Consider the following 512-residue polypeptide: MLQQADGVSPDRSSCDTPAPRTFEVRTYGCQMNVHDSERLSGLLEQAGYQRAGAGVDADIVVFNTCAVRENADNKLYGNLSHLAPRKQADPQMQIAVGGCLAQKDRDAVLRKAPWVDVVFGTHNIGSLPTLLDRARHNRVAQVEIAESLREFPSALPASRESAYAAWVSISVGCNNTCTFCIVPSLRGKEVDRRPGDVLAEVQALVDQGVLEITLLGQNVNAYGVSFADPTEARDRGAFAKLLRACGRIDGLERVRFTSPHPAEFTDDVIEAMAQTSNVCPTLHMPLQSGSDRILRAMRRSYRADRYLGIIDRVRTAIPHAAITTDLIVGFPGETEEDFQATLDVVEAARFSSAFTFQYSKRPGTPAAELEGQIPKAVVSERYQRLIELQERISWEENRAQIGREVELLVATGEGRKDAATARMSGRARDGRLVHFAPGALGADIRPGDIVVTTVTGAAPHHLIADAGPAEHRRTRAGDAHAEGRTPKTGVGLGMPGIGAPEPAPVTQGCAL.

Residues Met1–Pro20 form a disordered region. The 117-residue stretch at Arg21 to His137 folds into the MTTase N-terminal domain. 6 residues coordinate [4Fe-4S] cluster: Cys30, Cys66, Cys100, Cys174, Cys178, and Cys181. A Radical SAM core domain is found at Arg160 to Glu397. Residues Arg399–Pro469 form the TRAM domain. Residues Ala470–Thr486 show a composition bias toward basic and acidic residues. The interval Ala470–Leu512 is disordered.

Belongs to the methylthiotransferase family. MiaB subfamily. Monomer. [4Fe-4S] cluster serves as cofactor.

The protein resides in the cytoplasm. It carries out the reaction N(6)-dimethylallyladenosine(37) in tRNA + (sulfur carrier)-SH + AH2 + 2 S-adenosyl-L-methionine = 2-methylsulfanyl-N(6)-dimethylallyladenosine(37) in tRNA + (sulfur carrier)-H + 5'-deoxyadenosine + L-methionine + A + S-adenosyl-L-homocysteine + 2 H(+). Its function is as follows. Catalyzes the methylthiolation of N6-(dimethylallyl)adenosine (i(6)A), leading to the formation of 2-methylthio-N6-(dimethylallyl)adenosine (ms(2)i(6)A) at position 37 in tRNAs that read codons beginning with uridine. This is tRNA-2-methylthio-N(6)-dimethylallyladenosine synthase from Mycolicibacterium gilvum (strain PYR-GCK) (Mycobacterium gilvum (strain PYR-GCK)).